A 273-amino-acid chain; its full sequence is Dermonecrotic toxin LdSicTox-alphaIB1avi (273 aa).

H5 is a catalytic residue. Positions 25 and 27 each coordinate Mg(2+). H41 acts as the Nucleophile in catalysis. Disulfide bonds link C45–C51 and C47–C190. D85 serves as a coordination point for Mg(2+). The N-linked (GlcNAc...) asparagine glycan is linked to N250.

This sequence belongs to the arthropod phospholipase D family. Class II subfamily. Mg(2+) serves as cofactor. As to expression, expressed by the venom gland.

It localises to the secreted. It carries out the reaction an N-(acyl)-sphingosylphosphocholine = an N-(acyl)-sphingosyl-1,3-cyclic phosphate + choline. It catalyses the reaction an N-(acyl)-sphingosylphosphoethanolamine = an N-(acyl)-sphingosyl-1,3-cyclic phosphate + ethanolamine. The catalysed reaction is a 1-acyl-sn-glycero-3-phosphocholine = a 1-acyl-sn-glycero-2,3-cyclic phosphate + choline. The enzyme catalyses a 1-acyl-sn-glycero-3-phosphoethanolamine = a 1-acyl-sn-glycero-2,3-cyclic phosphate + ethanolamine. Its function is as follows. Dermonecrotic toxins cleave the phosphodiester linkage between the phosphate and headgroup of certain phospholipids (sphingolipid and lysolipid substrates), forming an alcohol (often choline) and a cyclic phosphate. This toxin acts on sphingomyelin (SM). It may also act on ceramide phosphoethanolamine (CPE), lysophosphatidylcholine (LPC) and lysophosphatidylethanolamine (LPE), but not on lysophosphatidylserine (LPS), and lysophosphatidylglycerol (LPG). It acts by transphosphatidylation, releasing exclusively cyclic phosphate products as second products. Induces dermonecrosis, hemolysis, increased vascular permeability, edema, inflammatory response, and platelet aggregation. The protein is Dermonecrotic toxin LdSicTox-alphaIB1avi of Loxosceles deserta (Desert recluse spider).